A 238-amino-acid chain; its full sequence is Ribonuclease PH (238 aa).

Phosphate contacts are provided by residues arginine 86 and glycine 124 to arginine 126.

It belongs to the RNase PH family. Homohexameric ring arranged as a trimer of dimers.

It catalyses the reaction tRNA(n+1) + phosphate = tRNA(n) + a ribonucleoside 5'-diphosphate. Its function is as follows. Phosphorolytic 3'-5' exoribonuclease that plays an important role in tRNA 3'-end maturation. Removes nucleotide residues following the 3'-CCA terminus of tRNAs; can also add nucleotides to the ends of RNA molecules by using nucleoside diphosphates as substrates, but this may not be physiologically important. Probably plays a role in initiation of 16S rRNA degradation (leading to ribosome degradation) during starvation. This chain is Ribonuclease PH, found in Proteus mirabilis (strain HI4320).